Reading from the N-terminus, the 254-residue chain is Proteasome activator complex subunit 3 (254 aa).

Ala-2 bears the N-acetylalanine mark. A phosphoserine mark is found at Ser-17 and Ser-24. N6-acetyllysine; by P300/CBP is present on Lys-195. Ser-247 carries the phosphoserine; by CHEK2 modification.

This sequence belongs to the PA28 family. Homoheptamer; the stability of the heptamer is essential for the specific activation of the trypsine-like subunit and inhibition of the chymotrypsin-like and postglutamyl-preferring (PGPH) subunits of the proteasome. Interacts with p53/TP53, MDM2 and MAP3K3. Associates with the proteasome. Interacts with CCAR2. Interacts with PSME3IP1 (via C-terminus); the interaction is direct and promotes the association of PSME3 with the 20S proteasome. Interacts with COIL; the interaction is inhibited by PSME3IP1. Phosphorylated by MAP3K3. Phosphorylation at Ser-247 promotes its association with CCAR2. Post-translationally, acetylation at the major site Lys-195 is important for oligomerization and ability to degrade its target substrates. Deacetylated by SIRT1.

The protein resides in the nucleus. It is found in the cytoplasm. In terms of biological role, subunit of the 11S REG-gamma (also called PA28-gamma) proteasome regulator, a doughnut-shaped homoheptamer which associates with the proteasome. 11S REG-gamma activates the trypsin-like catalytic subunit of the proteasome but inhibits the chymotrypsin-like and postglutamyl-preferring (PGPH) subunits. Facilitates the MDM2-p53/TP53 interaction which promotes ubiquitination- and MDM2-dependent proteasomal degradation of p53/TP53, limiting its accumulation and resulting in inhibited apoptosis after DNA damage. May also be involved in cell cycle regulation. Mediates CCAR2 and CHEK2-dependent SIRT1 inhibition. The polypeptide is Proteasome activator complex subunit 3 (PSME3) (Pongo abelii (Sumatran orangutan)).